A 142-amino-acid chain; its full sequence is Hemoglobin subunit alpha (142 aa).

The Globin domain maps to 1-142; that stretch reads VLSAADKNNV…VSTVLTSKYR (142 aa). S3 is modified (phosphoserine). Residues K7 and K11 each carry the N6-succinyllysine modification. K16 is modified (N6-acetyllysine; alternate). K16 carries the N6-succinyllysine; alternate modification. Y24 is modified (phosphotyrosine). S35 bears the Phosphoserine mark. At K40 the chain carries N6-succinyllysine. Residue H58 participates in O2 binding. H87 is a heme b binding site. A Phosphoserine modification is found at S102. T108 is subject to Phosphothreonine. S125 carries the phosphoserine modification. T135 and T138 each carry phosphothreonine. S139 is modified (phosphoserine).

The protein belongs to the globin family. In terms of assembly, heterotetramer of two alpha chains and two beta chains. As to expression, red blood cells.

Functionally, involved in oxygen transport from the lung to the various peripheral tissues. Its function is as follows. Hemopressin acts as an antagonist peptide of the cannabinoid receptor CNR1. Hemopressin-binding efficiently blocks cannabinoid receptor CNR1 and subsequent signaling. This Procavia capensis habessinica (Abyssinian hyrax) protein is Hemoglobin subunit alpha (HBA).